The following is a 289-amino-acid chain: Heme oxygenase 1 (289 aa).

Residues 1-12 (MERPQPDSSMPQ) show a composition bias toward polar residues. Residues 1 to 24 (MERPQPDSSMPQDLSEALKEATKE) form a disordered region. Residues 1–266 (MERPQPDSSM…KPQPSVLSQA (266 aa)) lie on the Cytoplasmic side of the membrane. Heme b contacts are provided by Lys-19, His-26, Tyr-135, and Arg-184. A disordered region spans residues 239–261 (RRAGSKVQDLAPTKASRGKPQPS). Position 243 is a phosphoserine (Ser-243). A helical; Anchor for type IV membrane protein transmembrane segment spans residues 267–289 (PLLRWVLTLSFLVATVAVGLYAM).

This sequence belongs to the heme oxygenase family. As to quaternary structure, homodimer and higher order homooligomer. Oligomerization is crucial for its stability and function in the endoplasmic reticulum. Interacts with FLVCR2; this interaction is potentiated in the presence of heme. A soluble form arises by proteolytic removal of the membrane anchor.

It is found in the endoplasmic reticulum membrane. It carries out the reaction heme b + 3 reduced [NADPH--hemoprotein reductase] + 3 O2 = biliverdin IXalpha + CO + Fe(2+) + 3 oxidized [NADPH--hemoprotein reductase] + 3 H2O + H(+). Its activity is regulated as follows. Inhibited by metalloporphyrins such as Sn-, Co-, Mn- and Zn-protoporphyrins. Functionally, catalyzes the oxidative cleavage of heme at the alpha-methene bridge carbon, released as carbon monoxide (CO), to generate biliverdin IXalpha, while releasing the central heme iron chelate as ferrous iron. Affords protection against programmed cell death and this cytoprotective effect relies on its ability to catabolize free heme and prevent it from sensitizing cells to undergo apoptosis. In terms of biological role, catalyzes the oxidative cleavage of heme at the alpha-methene bridge carbon, released as carbon monoxide (CO), to generate biliverdin IXalpha, while releasing the central heme iron chelate as ferrous iron. In Bos taurus (Bovine), this protein is Heme oxygenase 1 (HMOX1).